Here is a 557-residue protein sequence, read N- to C-terminus: MKNVDNYRRGYFMPPVKSLKWAEKEYITTPPTWCSVDLRDGNQALVVPMSLEEKLEYYHMLLKIGFKEIEVGFPAASETEYAFLRTLIEQNLIPEDVTIQVLTQSRDHIIEKTFKALVGVKKAVVHLYNSTSVAQREQVFKMSREEIVEIAVSGARLLKKYAAETEGNFQFEYSPESFTGTEMEFALEICNQVLDVFEPTPENKVIINLPATVSLSMPHVYASQIEYMSEHLKYRDNVILSLHPHNDRGTAVADAELGLLAGGQRIEGTLFGNGERTGNVDIVTLALNLFSHGVDPGLNFASMLEITAKYEALTRMKVHDRQPYGGKLVFAAFSGSHQDAITKGIKWREEHECHYWNVPYLLIDPQDIGREYEGDVIRINSQSGKGGIAYMLEQHYALDLPAKMREAFGYKVKNVSDNLHKELMPEEIKDIFFKEYVNIENPIKFLNFHFLNHDDFQTTVTLEFKGEIQELSGEGDGRLDAISNALQARLGLSYSNLIYKEHALELGSKSQAVSYVGVTGPDGVIHWGCGIHTDIFTSSVKALISAINTMIKDSAAV.

A Pyruvate carboxyltransferase domain is found at 31–304 (PTWCSVDLRD…DPGLNFASML (274 aa)). Positions 40, 243, 245, and 279 each coordinate Mg(2+). Residues 439–557 (IENPIKFLNF…NTMIKDSAAV (119 aa)) are regulatory domain.

Belongs to the alpha-IPM synthase/homocitrate synthase family. LeuA type 2 subfamily. In terms of assembly, homodimer. Mg(2+) is required as a cofactor.

It localises to the cytoplasm. It catalyses the reaction 3-methyl-2-oxobutanoate + acetyl-CoA + H2O = (2S)-2-isopropylmalate + CoA + H(+). Its pathway is amino-acid biosynthesis; L-leucine biosynthesis; L-leucine from 3-methyl-2-oxobutanoate: step 1/4. Functionally, catalyzes the condensation of the acetyl group of acetyl-CoA with 3-methyl-2-oxobutanoate (2-ketoisovalerate) to form 3-carboxy-3-hydroxy-4-methylpentanoate (2-isopropylmalate). The sequence is that of 2-isopropylmalate synthase from Desulfitobacterium hafniense (strain Y51).